A 209-amino-acid chain; its full sequence is Protein ASG7 (209 aa).

The Lumenal segment spans residues 1 to 49 (MTTLASSIEHKTKHLAAPFENDENPWMKKYCCQCKSCKMSVPVQPWLPR). Residues 50-70 (FFVFGILCPVFWLVNLLAWWF) traverse the membrane as a helical segment. Over 71–184 (LQYWQPHELE…LLRKTFRDWN (114 aa)) the chain is Cytoplasmic. Phosphoserine occurs at positions 121, 123, and 125. Phosphothreonine is present on threonine 153. A helical membrane pass occupies residues 185 to 205 (LRSLLGLLIDSILIIFVVLLC). Topologically, residues 206–209 (KKSR) are lumenal.

The protein resides in the endomembrane system. In terms of biological role, required for receptor inhibition of inappropriately expressed a-factor receptor (STE3) in MAT a cells. Inhibits signaling by relocalizing the G protein beta-gamma (STE4-STE18) subunit to intracellular membranes. May also be a mechanism for the down-regulation of the mating pheromone response after the zygotic fusion event, promoting the transition of the new diploid cell to vegetative growth. The sequence is that of Protein ASG7 (ASG7) from Saccharomyces cerevisiae (strain ATCC 204508 / S288c) (Baker's yeast).